A 216-amino-acid polypeptide reads, in one-letter code: Transmembrane protein 186 (216 aa).

Residues methionine 1 to leucine 68 lie on the Mitochondrial matrix side of the membrane. Residues glycine 69–tyrosine 91 traverse the membrane as a helical segment. Over cysteine 92–leucine 103 the chain is Mitochondrial intermembrane. Residues glycine 104 to phenylalanine 124 traverse the membrane as a helical segment. The Mitochondrial matrix portion of the chain corresponds to arginine 125–lysine 216.

Belongs to the TMEM186 family. Part of the mitochondrial complex I assembly/MCIA complex that comprises at least the core subunits TMEM126B, NDUFAF1, ECSIT and ACAD9 and complement subunits such as COA1 and TMEM186. Interacts with MT-ND3.

The protein resides in the mitochondrion inner membrane. Its function is as follows. As part of the MCIA complex, required for efficient assembly of the mitochondrial complex I. This Rattus norvegicus (Rat) protein is Transmembrane protein 186.